A 268-amino-acid chain; its full sequence is Probable 6-phosphogluconolactonase 1 (268 aa).

It belongs to the glucosamine/galactosamine-6-phosphate isomerase family. 6-phosphogluconolactonase subfamily.

The protein localises to the cytoplasm. It localises to the cytosol. It catalyses the reaction 6-phospho-D-glucono-1,5-lactone + H2O = 6-phospho-D-gluconate + H(+). It participates in carbohydrate degradation; pentose phosphate pathway; D-ribulose 5-phosphate from D-glucose 6-phosphate (oxidative stage): step 2/3. Functionally, catalyzes the hydrolysis of 6-phosphogluconolactone to 6-phosphogluconate. The chain is Probable 6-phosphogluconolactonase 1 from Arabidopsis thaliana (Mouse-ear cress).